A 446-amino-acid chain; its full sequence is Adenylosuccinate synthetase (446 aa).

Residues 20–26 (GDEGKGK) and 48–50 (GHT) each bind GTP. The active-site Proton acceptor is the D21. Mg(2+) is bound by residues D21 and G48. IMP contacts are provided by residues 21–24 (DEGK), 46–49 (NAGH), T137, R151, Q232, T247, and R319. H49 serves as the catalytic Proton donor. 315–321 (SVTGRPR) is a substrate binding site. GTP-binding positions include R321, 347 to 349 (KLD), and 429 to 431 (STG).

The protein belongs to the adenylosuccinate synthetase family. As to quaternary structure, homodimer. The cofactor is Mg(2+).

It localises to the cytoplasm. The catalysed reaction is IMP + L-aspartate + GTP = N(6)-(1,2-dicarboxyethyl)-AMP + GDP + phosphate + 2 H(+). The protein operates within purine metabolism; AMP biosynthesis via de novo pathway; AMP from IMP: step 1/2. In terms of biological role, plays an important role in the de novo pathway of purine nucleotide biosynthesis. Catalyzes the first committed step in the biosynthesis of AMP from IMP. The sequence is that of Adenylosuccinate synthetase from Polynucleobacter asymbioticus (strain DSM 18221 / CIP 109841 / QLW-P1DMWA-1) (Polynucleobacter necessarius subsp. asymbioticus).